Reading from the N-terminus, the 684-residue chain is Probable potassium transport system protein Kup (684 aa).

12 consecutive transmembrane segments (helical) span residues 19–39, 61–81, 104–124, 151–171, 177–197, 223–243, 255–275, 303–323, 352–372, 381–401, 407–427, and 433–453; these read ALLV…LYVM, VSLI…LIAL, WLVL…MLTP, QVIW…RFGT, AFGP…FIAL, MGLF…ALYS, LSWP…AVWL, LGAI…LISG, LYIP…IGYF, AYGL…YQYL, PAVV…VFFI, and FLHG…VMYV.

The protein belongs to the HAK/KUP transporter (TC 2.A.72) family.

It is found in the cell membrane. It carries out the reaction K(+)(in) + H(+)(in) = K(+)(out) + H(+)(out). In terms of biological role, transport of potassium into the cell. Likely operates as a K(+):H(+) symporter. In Lacticaseibacillus paracasei (strain ATCC 334 / BCRC 17002 / CCUG 31169 / CIP 107868 / KCTC 3260 / NRRL B-441) (Lactobacillus paracasei), this protein is Probable potassium transport system protein Kup.